The following is a 204-amino-acid chain: Sex-determining region Y protein (204 aa).

A sufficient for interaction with KPNB1 region spans residues 59-136; that stretch reads RVKRPMNAFI…YKYRPRRKAK (78 aa). The HMG box DNA-binding region spans 60–128; sequence VKRPMNAFIV…MHREKYPNYK (69 aa). Required for nuclear localization stretches follow at residues 61-77 and 130-136; these read KRPMNAFIVWSRDQRRK and RPRRKAK. The segment at 107-139 is sufficient for interaction with EP300; that stretch reads WPFFQEAQKLQAMHREKYPNYKYRPRRKAKMLP. Position 136 is an N6-acetyllysine (Lys136). Positions 138–155 are necessary for interaction with ZNF208 isoform KRAB-O; it reads LPKNCSLLPADPASVLCS. Residues 175-204 form a disordered region; it reads RMEHQLGHLPPINAASSPQQRDRYSHWTKL. Basic and acidic residues predominate over residues 194-204; sequence QRDRYSHWTKL. The interval 198-204 is necessary for interaction with SLC9A3R2; sequence YSHWTKL.

Belongs to the SRY family. Interacts with CALM, EP300, HDAC3, KPNB1, ZNF208 isoform KRAB-O, PARP1, SLC9A3R2 and WT1. The interaction with EP300 modulates its DNA-binding activity. The interaction with KPNB1 is sensitive to dissociation by Ran in the GTP-bound form. Interaction with PARP1 impaired its DNA-binding activity. In terms of processing, phosphorylated on serine residues by PKA. Phosphorylation by PKA enhances its DNA-binding activity and stimulates transcription repression. Acetylation of Lys-136 contributes to its nuclear localization and enhances its interaction with KPNB1. Deacetylated by HDAC3. Post-translationally, poly-ADP-ribosylated by PARP1. ADP-ribosylation reduces its DNA-binding activity.

The protein resides in the nucleus speckle. Its subcellular location is the cytoplasm. It localises to the nucleus. Transcriptional regulator that controls a genetic switch in male development. It is necessary and sufficient for initiating male sex determination by directing the development of supporting cell precursors (pre-Sertoli cells) as Sertoli rather than granulosa cells. Involved in different aspects of gene regulation including promoter activation or repression. Binds to the DNA consensus sequence 5'-[AT]AACAA[AT]-3'. SRY HMG box recognizes DNA by partial intercalation in the minor groove and promotes DNA bending. Also involved in pre-mRNA splicing. In male adult brain involved in the maintenance of motor functions of dopaminergic neurons. This Homo sapiens (Human) protein is Sex-determining region Y protein.